Here is a 556-residue protein sequence, read N- to C-terminus: Hydroxylamine reductase (556 aa).

[4Fe-4S] cluster contacts are provided by Cys5, Cys8, Cys17, and Cys23. His249, Glu273, Cys317, Cys409, Cys437, Cys462, Glu497, and Lys499 together coordinate hybrid [4Fe-2O-2S] cluster. Cys409 is modified (cysteine persulfide).

It belongs to the HCP family. It depends on [4Fe-4S] cluster as a cofactor. Hybrid [4Fe-2O-2S] cluster serves as cofactor.

It is found in the cytoplasm. It carries out the reaction A + NH4(+) + H2O = hydroxylamine + AH2 + H(+). Catalyzes the reduction of hydroxylamine to form NH(3) and H(2)O. In Kosmotoga olearia (strain ATCC BAA-1733 / DSM 21960 / TBF 19.5.1), this protein is Hydroxylamine reductase.